A 41-amino-acid chain; its full sequence is Photosystem I reaction center subunit IX (41 aa).

Residues 7–27 (YLSTAPVVAFAWLTFTAGFII) form a helical membrane-spanning segment.

The protein belongs to the PsaJ family.

The protein resides in the plastid. It localises to the chloroplast thylakoid membrane. Its function is as follows. May help in the organization of the PsaE and PsaF subunits. This chain is Photosystem I reaction center subunit IX, found in Stigeoclonium helveticum (Green alga).